Consider the following 152-residue polypeptide: Ribosome maturation factor RimP (152 aa).

This sequence belongs to the RimP family.

Its subcellular location is the cytoplasm. Functionally, required for maturation of 30S ribosomal subunits. The protein is Ribosome maturation factor RimP of Sodalis glossinidius (strain morsitans).